Reading from the N-terminus, the 151-residue chain is Small ribosomal subunit protein uS19 (151 aa).

Residue alanine 2 is modified to N-acetylalanine.

It belongs to the universal ribosomal protein uS19 family.

Its function is as follows. Negatively regulates lifespan. In Caenorhabditis elegans, this protein is Small ribosomal subunit protein uS19.